Here is a 587-residue protein sequence, read N- to C-terminus: Xyloglucan-specific endo-beta-1,4-glucanase BoGH9A (587 aa).

An N-terminal signal peptide occupies residues 1–19 (MKIVRYIALFGILSGLAVA). Residue Cys20 is the site of N-palmitoyl cysteine attachment. Cys20 is lipidated: S-diacylglycerol cysteine. Asp185 (nucleophile) is an active-site residue. Active-site residues include His511 and Asp553. The Proton donor role is filled by Glu562.

It belongs to the glycosyl hydrolase 9 (cellulase E) family.

The protein localises to the cell outer membrane. The catalysed reaction is xyloglucan + H2O = xyloglucan oligosaccharides.. It participates in glucan metabolism; xyloglucan degradation. Functionally, catalyzes endohydrolysis of 1,4-beta-D-glucosidic linkages in xyloglucan with retention of the beta-configuration of the glycosyl residues in xyloglucan degradation. Cleaves the backbone of the 3 major types of natural xyloglucans (seed galactoxyloglucan from tamarind kernel, dicot fucogalactoxyloglucan from lettuce leaves, and solanaceous arabinogalactoxyloglucan from tomato fruit), to produce xyloglucan oligosaccharides. May be superfluous in xyloglucan degradation compared to BoGH5A (AC A7LXT7), the other Xyloglucan-specific endo-beta-1,4-glucanase. This chain is Xyloglucan-specific endo-beta-1,4-glucanase BoGH9A, found in Bacteroides ovatus (strain ATCC 8483 / DSM 1896 / JCM 5824 / BCRC 10623 / CCUG 4943 / NCTC 11153).